A 540-amino-acid chain; its full sequence is Sterol O-acyltransferase 1 (540 aa).

The segment at Met1–Gln20 is disordered. Residues Met1–Ile128 are Cytoplasmic-facing. Residue Ser2 is modified to Phosphoserine. Position 127 (His127) interacts with cholesterol. A helical membrane pass occupies residues Arg129–Asp150. Over Tyr151 to Lys170 the chain is Lumenal. Residues Phe171–Trp196 form a helical membrane-spanning segment. Over Ala197–Ile208 the chain is Cytoplasmic. The chain crosses the membrane as a helical span at residues Tyr209–Leu234. Residues Ala235–Ser242 lie on the Lumenal side of the membrane. The helical transmembrane segment at Arg243–Pro266 threads the bilayer. The Cytoplasmic portion of the chain corresponds to Arg267–Arg309. A helical transmembrane segment spans residues Trp310–Ile342. Topologically, residues Lys343 to Ser359 are lumenal. Residues Ile360–Met385 traverse the membrane as a helical segment. Topologically, residues Leu386–Arg433 are cytoplasmic. Residues Phe393–Asn399 carry the FYXDWWN motif motif. Residues Asn405, Arg408, Asn411, His415, Tyr423, Lys435, and Ser446 each coordinate an acyl-CoA. The chain crosses the membrane as a helical span at residues Phe434–Leu458. The active site involves His450. Residues Ser459–Val464 are Lumenal-facing. A helical membrane pass occupies residues Leu465–Val480. Topologically, residues Asn481–Arg486 are cytoplasmic. Residues Pro487 to Cys518 form a helical membrane-spanning segment. A disulfide bridge connects residues Cys518 and Cys536. The Lumenal portion of the chain corresponds to Pro519–Phe540.

It belongs to the membrane-bound acyltransferase family. Sterol o-acyltransferase subfamily. In terms of assembly, may form homo- or heterodimers. Interacts with UBIAD1.

The protein localises to the endoplasmic reticulum membrane. The enzyme catalyses a sterol + a long-chain fatty acyl-CoA = a long-chain 3-hydroxysterol ester + CoA. The catalysed reaction is cholesterol + an acyl-CoA = a cholesterol ester + CoA. It catalyses the reaction cholesterol + (9Z)-octadecenoyl-CoA = cholesteryl (9Z-octadecenoate) + CoA. It carries out the reaction cholesterol + hexadecanoyl-CoA = cholesteryl hexadecanoate + CoA. The enzyme catalyses octadecanoyl-CoA + cholesterol = cholesteryl octadecanoate + CoA. The catalysed reaction is (9Z,12Z)-octadecadienoyl-CoA + cholesterol = cholesteryl (9Z,12Z)-octadecadienoate + CoA. It catalyses the reaction (5Z,8Z,11Z,14Z)-eicosatetraenoyl-CoA + cholesterol = cholesteryl (5Z,8Z,11Z,14Z)-eicosatetraenoate + CoA. It carries out the reaction (9Z)-hexadecenoyl-CoA + cholesterol = cholesteryl (9Z)-hexadecenoate + CoA. The enzyme catalyses (11Z)-octadecenoyl-CoA + cholesterol = cholesteryl (11Z)-octadecenoate + CoA. The catalysed reaction is (7Z)-octadecenoyl-CoA + cholesterol = cholesteryl (7Z)-octadecenoate + CoA. Its function is as follows. Catalyzes the formation of fatty acid-cholesterol esters, which are less soluble in membranes than cholesterol. Plays a role in lipoprotein assembly and dietary cholesterol absorption. Preferentially utilizes oleoyl-CoA ((9Z)-octadecenoyl-CoA) as a substrate: shows a higher activity towards an acyl-CoA substrate with a double bond at the delta-9 position (9Z) than towards saturated acyl-CoA or an unsaturated acyl-CoA with a double bond at the delta-7 (7Z) or delta-11 (11Z) positions. This Mus musculus (Mouse) protein is Sterol O-acyltransferase 1.